Reading from the N-terminus, the 880-residue chain is Leucine-rich repeat-containing protein 66 (880 aa).

A helical membrane pass occupies residues 4–24 (LYFRVITIVIGLYFTGIMTNA). Residue asparagine 45 is glycosylated (N-linked (GlcNAc...) asparagine). LRR repeat units follow at residues 86 to 107 (KIKHLDLSNNLISKITLSPFAY), 110 to 130 (ALEVLNLSNNAIHSLSLDLLS), 149 to 171 (LLKVLILQRNKLSDTPKGLWKLK), 172 to 193 (SLQSLDLSFNGILQIGWSDFHN), 196 to 217 (QLENLCLKSNKIFKIPPQAFKD), and 220 to 241 (KLQVIDLSNNALITILPMMIIA). A glycan (N-linked (GlcNAc...) asparagine) is linked at asparagine 115. The disordered stretch occupies residues 319–368 (SKAERPQGGRHTGISTLGKKAKAGSGLRKKQRRLPRSVRSTRDVQAAGKK). Residues 337–354 (KKAKAGSGLRKKQRRLPR) are compositionally biased toward basic residues. Residues 376–396 (ALAVCLSVFITFLVAFSLGAF) form a helical membrane-spanning segment. Disordered stretches follow at residues 463–504 (PHPH…NDGA) and 679–746 (VTPA…SKDN). Over residues 483-493 (GSSQSPGQCGD) the composition is skewed to polar residues. The segment covering 697–707 (CELESDCDSDE) has biased composition (acidic residues). Low complexity predominate over residues 709 to 720 (SLFTLSSISSES). Phosphoserine is present on serine 723. The span at 737–746 (DESSGASKDN) shows a compositional bias: polar residues. N-linked (GlcNAc...) asparagine glycosylation occurs at asparagine 746. Position 752 is a phosphoserine (serine 752). Asparagine 756 is a glycosylation site (N-linked (GlcNAc...) asparagine). Disordered stretches follow at residues 764-816 (GKCK…PLGD) and 855-880 (TPPCSAEVPSDPDKAAFHERDSDILK). Basic and acidic residues-rich tracts occupy residues 788–800 (THLENASDTDRSE) and 865–880 (DPDKAAFHERDSDILK).

The protein localises to the membrane. This Homo sapiens (Human) protein is Leucine-rich repeat-containing protein 66 (LRRC66).